Reading from the N-terminus, the 114-residue chain is Iron-sulfur cluster insertion protein ErpA (114 aa).

Residues C42, C106, and C108 each coordinate iron-sulfur cluster.

This sequence belongs to the HesB/IscA family. As to quaternary structure, homodimer. Iron-sulfur cluster serves as cofactor.

Its function is as follows. Required for insertion of 4Fe-4S clusters for at least IspG. This chain is Iron-sulfur cluster insertion protein ErpA, found in Serratia proteamaculans (strain 568).